The following is a 183-amino-acid chain: ATP synthase subunit delta (183 aa).

Belongs to the ATPase delta chain family. F-type ATPases have 2 components, F(1) - the catalytic core - and F(0) - the membrane proton channel. F(1) has five subunits: alpha(3), beta(3), gamma(1), delta(1), epsilon(1). F(0) has three main subunits: a(1), b(2) and c(10-14). The alpha and beta chains form an alternating ring which encloses part of the gamma chain. F(1) is attached to F(0) by a central stalk formed by the gamma and epsilon chains, while a peripheral stalk is formed by the delta and b chains.

The protein localises to the cell inner membrane. Functionally, f(1)F(0) ATP synthase produces ATP from ADP in the presence of a proton or sodium gradient. F-type ATPases consist of two structural domains, F(1) containing the extramembraneous catalytic core and F(0) containing the membrane proton channel, linked together by a central stalk and a peripheral stalk. During catalysis, ATP synthesis in the catalytic domain of F(1) is coupled via a rotary mechanism of the central stalk subunits to proton translocation. This protein is part of the stalk that links CF(0) to CF(1). It either transmits conformational changes from CF(0) to CF(1) or is implicated in proton conduction. The chain is ATP synthase subunit delta from Desulfovibrio desulfuricans (strain ATCC 27774 / DSM 6949 / MB).